The sequence spans 488 residues: Palmitoleoyl-protein carboxylesterase notum1' (488 aa).

Residues 1 to 19 form the signal peptide; sequence MAGTLCVTLLLLLSTIAVG. N-linked (GlcNAc...) asparagine glycosylation occurs at Asn90. Active-site charge relay system residues include Ser226, Asp334, and His383.

It belongs to the pectinacetylesterase family. Notum subfamily. Expressed in the egg and through cleavage to gastrulation stages. Enriched in the animal (prospective ectoderm) and dorsal regions in early gastrula. Shows a dynamic expression during embryogenesis, in particular during neural induction and antero-posterior (AP) patterning.

It localises to the secreted. It catalyses the reaction [Wnt protein]-O-(9Z)-hexadecenoyl-L-serine + H2O = [Wnt protein]-L-serine + (9Z)-hexadecenoate + H(+). Its function is as follows. Carboxylesterase that acts as a key negative regulator of the Wnt signaling pathway by specifically mediating depalmitoleoylation of WNT proteins. Serine palmitoleoylation of WNT proteins is required for efficient binding to frizzled receptors. Functions in the prospective ectoderm and is required for neural induction. In Xenopus laevis (African clawed frog), this protein is Palmitoleoyl-protein carboxylesterase notum1'.